The following is a 1089-amino-acid chain: Electroneutral sodium bicarbonate exchanger 1 (1089 aa).

Residues 1–476 (MPAGSNEPDG…DYRDALSLQC (476 aa)) are Extracellular-facing. Residues 55 to 90 (LGRQSHRHHRTHGQKHRRRGGRGKGASQGEEGLEAL) form a disordered region. The segment covering 58 to 76 (QSHRHHRTHGQKHRRRGGR) has biased composition (basic residues). A helical transmembrane segment spans residues 477–497 (LASFLFLYCACMSPVITFGGL). The Cytoplasmic portion of the chain corresponds to 498-505 (LGEATEGR). Residues 506–526 (ISAIESLFGASMTGIAYSLFA) traverse the membrane as a helical segment. The Extracellular segment spans residues 527 to 563 (GQPLTILGSTGPVLVFEKILFKFCKDYALSYLSLRAL). The chain crosses the membrane as a helical span at residues 564 to 584 (IGLWTAFLCIVLVATDASSLV). Topologically, residues 585 to 593 (CYITRFTEE) are cytoplasmic. A helical transmembrane segment spans residues 594–614 (AFASLICIIFIYEAIEKLIHL). Residues 615–685 (AETYPIHMHS…EFMGSACGHH (71 aa)) lie on the Extracellular side of the membrane. 2 disulfides stabilise this stretch: Cys-634–Cys-682 and Cys-636–Cys-670. N-linked (GlcNAc) asparagine glycosylation is present at Asn-644. The helical transmembrane segment at 686–706 (GPYTPDVLFWSCILFFATFIV) threads the bilayer. Topologically, residues 707–729 (SSTLKTFKTSRYFPTRVRSMVSD) are cytoplasmic. The chain crosses the membrane as a helical span at residues 730 to 750 (FAVFLTIFTMVVLDFLIGVPS). The Extracellular segment spans residues 751–776 (PKLQVPNVFKPTRDDRGWFINPIGPN). The helical transmembrane segment at 777–797 (PWWTVIAAIIPALLCTILIFM) threads the bilayer. Topologically, residues 798-822 (DQQITAVIINRKEHKLKKGCGYHLD) are cytoplasmic. A helical membrane pass occupies residues 823 to 843 (LLMVAVMLGVCSIMGLPWFVA). The Extracellular portion of the chain corresponds to 844-879 (ATVLSITHVNSLKLESECSAPGEQPKFLGIREQRVT). Residues 880 to 900 (GLMIFVLMGCSVFMTAVLKFI) form a helical membrane-spanning segment. The Cytoplasmic segment spans residues 901–902 (PM). Residues 903–923 (PVLYGVFLYMGVSSLQGIQFF) form a helical membrane-spanning segment. At 924–960 (DRLKLFGMPAKHQPDFIYLRHVPLRKVHLFTLVQLTC) the chain is on the extracellular side. The chain crosses the membrane as a helical span at residues 961-981 (LVLLWVIKASPAAIVFPMMVL). Over 982–1089 (ALVFVRKVMD…GNTKEKSPFN (108 aa)) the chain is Cytoplasmic.

It belongs to the anion exchanger (TC 2.A.31) family. Homodimer. In terms of tissue distribution, expressed in the hippocampal neurons (at protein level). Highly expressed in brain with lower levels in lung, kidney and heart. In the kidney, there is high expression in the inner medulla, localized to the inner medullary collecting duct. In the brain, there seems to be three transcripts each having a different expression pattern. The smaller 3kb transcript has highest expression levels in the thalamus and the largest 9.5kb transcript has highest levels in the substantia nigra. The middle transcript of 4.4kb, which is also the main transcript in kidney, is highly expressed in thalamus. Hence, the highest levels are observed in the thalamus, amygdala and caudate nucleus and very low expression was seen in the corpus callosum.

The protein localises to the cell membrane. The protein resides in the apical cell membrane. It is found in the basolateral cell membrane. Its subcellular location is the cytoplasmic vesicle. It localises to the secretory vesicle. The protein localises to the synaptic vesicle membrane. The catalysed reaction is 2 hydrogencarbonate(out) + chloride(in) + Na(+)(out) = 2 hydrogencarbonate(in) + chloride(out) + Na(+)(in). In terms of biological role, mediates electroneutral sodium- and carbonate-dependent chloride-HCO3(-) exchange with a Na(+):HCO3(-) stoichiometry of 2:1. Plays a major role in pH regulation in neurons. Mediates sodium reabsorption in the renal cortical collecting ducts. In Mus musculus (Mouse), this protein is Electroneutral sodium bicarbonate exchanger 1.